The sequence spans 181 residues: Large ribosomal subunit protein uL5 (181 aa).

This sequence belongs to the universal ribosomal protein uL5 family. Part of the 50S ribosomal subunit; part of the 5S rRNA/L5/L18/L25 subcomplex. Contacts the 5S rRNA and the P site tRNA. Forms a bridge to the 30S subunit in the 70S ribosome.

Its function is as follows. This is one of the proteins that bind and probably mediate the attachment of the 5S RNA into the large ribosomal subunit, where it forms part of the central protuberance. In the 70S ribosome it contacts protein S13 of the 30S subunit (bridge B1b), connecting the 2 subunits; this bridge is implicated in subunit movement. Contacts the P site tRNA; the 5S rRNA and some of its associated proteins might help stabilize positioning of ribosome-bound tRNAs. The sequence is that of Large ribosomal subunit protein uL5 from Onion yellows phytoplasma (strain OY-M).